The chain runs to 226 residues: Charged multivesicular body protein 4 (226 aa).

Residues 22 to 88 (IQKLRETENM…DGTLSTIEMQ (67 aa)) are a coiled coil. The tract at residues 169–226 (QENFDKEIIGIPEPTPTLPEAPTEDLPEKAKEKKKATTTTAVEDDDDPDMKQLLSWSN) is disordered.

This sequence belongs to the SNF7 family. In terms of assembly, homopolymer; forms elongated striated filaments of uniform ~10nm width. Monomers interact in a staggered arrangement mediated by complementary charged electrostatic surfaces. Interacts with l(2)gd1 (via DM14 domains 1 and 3); the interaction is direct and blocks access to the surface involved in homopolymerization. This interaction may be required for the ESCRT-III complex role in multivesicular body formation. In terms of tissue distribution, expressed at considerably higher levels in testis than in ovary. Expressed in midgut, eye, mouthparts and male accessory gland.

It is found in the endosome. The protein localises to the multivesicular body. The protein resides in the midbody. With respect to regulation, may be regulated by aurB/Aurora kinase B-dependent phosphorylation. Functionally, probable core polymerisation component of the endosomal sorting required for transport (ESCRT) III complex involved in multiple cellular processes requiring the outward bending of membranes, including vesicle budding, membrane repair and cytokinesis. The ESCRT pathway involves 4 complexes (ESCRT-0, -I, -II and -III) that sequentially assemble on the cytoplasmic side of membranes and induce membrane remodeling, budding and scission. As part of the ESCRT-III complex, involved in the budding of intraluminal vesicles (ILVs) into endosomes to form multivesicular bodies (MVBs), which target their contents for degradation via the endolysosomal pathway. Involved in regulation of signal transduction pathways, including the Notch and BMP/decapentaplegic (dpp) pathways, by sequestering the intracellular domains of activated receptors into ILVs, isolating them from the cytoplasm and targeting them for lysosomal degradation. Involved in targeting ubiquitilated proteins, such as mono-ubiquitilanated N/Notch, to MVBs for degradation. Plays a role in wing development by regulating Notch signaling. Involved in abscission of germline cells during oogenesis. Involved in spermiogenesis. Required for efficient cytoplasmic isolation and abscission during cytokinesis of epithelial sensory organ precursor cells. May be involved in septate junction remodeling and maintenance. The sequence is that of Charged multivesicular body protein 4 from Drosophila melanogaster (Fruit fly).